The chain runs to 200 residues: MKSTEQHYSIKEAMLFSQRIAQLSKALWKSIEKDWQQWIKPFNLNINEHHILWIAYHFKGASISEIAKFGVMHVSTAFNFSKKLEEKGLLSFSKKQDDKRNTYIELTEKGEEVLMKLMETYDPTRNAVFNGALPLRELYGKFPEILEMMCIVRNIYGDDFMEIFERAFENIKEDFVEQDGKLVKRAPKAEEHEKELASPG.

Residues 13–157 (AMLFSQRIAQ…MMCIVRNIYG (145 aa)) form the HTH marR-type domain. Positions 63–86 (ISEIAKFGVMHVSTAFNFSKKLEE) form a DNA-binding region, H-T-H motif.

In terms of assembly, homodimer.

Functionally, negative regulator of protease production and sporulation. This is HTH-type transcriptional regulator Hpr from Geobacillus thermodenitrificans (strain NG80-2).